A 1131-amino-acid polypeptide reads, in one-letter code: DNA polymerase II large subunit (1131 aa).

It belongs to the archaeal DNA polymerase II family. As to quaternary structure, heterodimer of a large subunit and a small subunit.

It carries out the reaction DNA(n) + a 2'-deoxyribonucleoside 5'-triphosphate = DNA(n+1) + diphosphate. It catalyses the reaction Exonucleolytic cleavage in the 3'- to 5'-direction to yield nucleoside 5'-phosphates.. Possesses two activities: a DNA synthesis (polymerase) and an exonucleolytic activity that degrades single-stranded DNA in the 3'- to 5'-direction. Has a template-primer preference which is characteristic of a replicative DNA polymerase. The chain is DNA polymerase II large subunit from Methanococcus maripaludis (strain DSM 14266 / JCM 13030 / NBRC 101832 / S2 / LL).